The sequence spans 525 residues: Protein nucleotidyltransferase YdiU (525 aa).

ATP-binding residues include G107, G109, R110, K129, D141, G142, R192, and R199. The active-site Proton acceptor is the D268. Mg(2+) contacts are provided by N269 and D278. D278 serves as a coordination point for ATP.

Belongs to the SELO family. Requires Mg(2+) as cofactor. It depends on Mn(2+) as a cofactor.

It catalyses the reaction L-seryl-[protein] + ATP = 3-O-(5'-adenylyl)-L-seryl-[protein] + diphosphate. The enzyme catalyses L-threonyl-[protein] + ATP = 3-O-(5'-adenylyl)-L-threonyl-[protein] + diphosphate. The catalysed reaction is L-tyrosyl-[protein] + ATP = O-(5'-adenylyl)-L-tyrosyl-[protein] + diphosphate. It carries out the reaction L-histidyl-[protein] + UTP = N(tele)-(5'-uridylyl)-L-histidyl-[protein] + diphosphate. It catalyses the reaction L-seryl-[protein] + UTP = O-(5'-uridylyl)-L-seryl-[protein] + diphosphate. The enzyme catalyses L-tyrosyl-[protein] + UTP = O-(5'-uridylyl)-L-tyrosyl-[protein] + diphosphate. Nucleotidyltransferase involved in the post-translational modification of proteins. It can catalyze the addition of adenosine monophosphate (AMP) or uridine monophosphate (UMP) to a protein, resulting in modifications known as AMPylation and UMPylation. In Ralstonia nicotianae (strain ATCC BAA-1114 / GMI1000) (Ralstonia solanacearum), this protein is Protein nucleotidyltransferase YdiU.